Reading from the N-terminus, the 414-residue chain is ATP-dependent Clp protease ATP-binding subunit ClpX (414 aa).

The region spanning 1–51 (MADSKTKKKCSFCGRSENEVGFLITGMNGYICDSCATQAYEITQEALGEGR) is the ClpX-type ZB domain. Positions 10, 13, 32, and 35 each coordinate Zn(2+). 120–127 (STGTGKTL) lines the ATP pocket.

Belongs to the ClpX chaperone family. In terms of assembly, component of the ClpX-ClpP complex. Forms a hexameric ring that, in the presence of ATP, binds to fourteen ClpP subunits assembled into a disk-like structure with a central cavity, resembling the structure of eukaryotic proteasomes.

ATP-dependent specificity component of the Clp protease. It directs the protease to specific substrates. Can perform chaperone functions in the absence of ClpP. This chain is ATP-dependent Clp protease ATP-binding subunit ClpX, found in Bacteroides thetaiotaomicron (strain ATCC 29148 / DSM 2079 / JCM 5827 / CCUG 10774 / NCTC 10582 / VPI-5482 / E50).